We begin with the raw amino-acid sequence, 545 residues long: Esterase-5C (545 aa).

Positions 1–19 are cleaved as a signal peptide; the sequence is MLAARLIILLSFYWLSASA. Cysteine 84 and cysteine 103 form a disulfide bridge. N-linked (GlcNAc...) asparagine glycosylation occurs at asparagine 113. The Acyl-ester intermediate role is filled by serine 207. Cysteine 259 and cysteine 271 are disulfide-bonded. N-linked (GlcNAc...) asparagine glycosylation occurs at asparagine 421. Histidine 467 functions as the Charge relay system in the catalytic mechanism. Residue asparagine 507 is glycosylated (N-linked (GlcNAc...) asparagine). A disulfide bridge links cysteine 515 with cysteine 536.

It belongs to the type-B carboxylesterase/lipase family.

It localises to the secreted. The catalysed reaction is a carboxylic ester + H2O = an alcohol + a carboxylate + H(+). The protein is Esterase-5C (Est-5C) of Drosophila miranda (Fruit fly).